The sequence spans 293 residues: Ethanolamine ammonia-lyase small subunit (293 aa).

Residues valine 207 and glutamate 228 each contribute to the adenosylcob(III)alamin site.

It belongs to the EutC family. The basic unit is a heterodimer which dimerizes to form tetramers. The heterotetramers trimerize; 6 large subunits form a core ring with 6 small subunits projecting outwards. It depends on adenosylcob(III)alamin as a cofactor.

It is found in the bacterial microcompartment. It carries out the reaction ethanolamine = acetaldehyde + NH4(+). The protein operates within amine and polyamine degradation; ethanolamine degradation. In terms of biological role, catalyzes the deamination of various vicinal amino-alcohols to oxo compounds. Allows this organism to utilize ethanolamine as the sole source of nitrogen and carbon in the presence of external vitamin B12. The chain is Ethanolamine ammonia-lyase small subunit from Clostridioides difficile (strain 630) (Peptoclostridium difficile).